Here is a 201-residue protein sequence, read N- to C-terminus: Small ribosomal subunit protein uS4c (201 aa).

An S4 RNA-binding domain is found at 89 to 150 (MRLDNIVFRL…RQKSQAIITK (62 aa)).

It belongs to the universal ribosomal protein uS4 family. As to quaternary structure, part of the 30S ribosomal subunit. Contacts protein S5. The interaction surface between S4 and S5 is involved in control of translational fidelity.

The protein resides in the plastid. Its subcellular location is the chloroplast. In terms of biological role, one of the primary rRNA binding proteins, it binds directly to 16S rRNA where it nucleates assembly of the body of the 30S subunit. With S5 and S12 plays an important role in translational accuracy. This chain is Small ribosomal subunit protein uS4c (rps4), found in Funaria hygrometrica (Moss).